Consider the following 63-residue polypeptide: Transmembrane protein 033R (63 aa).

The sequence is that of Transmembrane protein 033R from Dryophytes versicolor (chameleon treefrog).